The following is a 277-amino-acid chain: Thymidylate synthase (277 aa).

DUMP is bound at residue Arg-21. Residue His-51 coordinates (6R)-5,10-methylene-5,6,7,8-tetrahydrofolate. 139–140 contacts dUMP; it reads RR. Cys-159 functions as the Nucleophile in the catalytic mechanism. Residues 179–182, Asn-190, and 220–222 contribute to the dUMP site; these read RSAD and HIY. Asp-182 contacts (6R)-5,10-methylene-5,6,7,8-tetrahydrofolate. Ala-276 contacts (6R)-5,10-methylene-5,6,7,8-tetrahydrofolate.

This sequence belongs to the thymidylate synthase family. Bacterial-type ThyA subfamily. In terms of assembly, homodimer.

Its subcellular location is the cytoplasm. The enzyme catalyses dUMP + (6R)-5,10-methylene-5,6,7,8-tetrahydrofolate = 7,8-dihydrofolate + dTMP. It functions in the pathway pyrimidine metabolism; dTTP biosynthesis. In terms of biological role, catalyzes the reductive methylation of 2'-deoxyuridine-5'-monophosphate (dUMP) to 2'-deoxythymidine-5'-monophosphate (dTMP) while utilizing 5,10-methylenetetrahydrofolate (mTHF) as the methyl donor and reductant in the reaction, yielding dihydrofolate (DHF) as a by-product. This enzymatic reaction provides an intracellular de novo source of dTMP, an essential precursor for DNA biosynthesis. This Ruegeria sp. (strain TM1040) (Silicibacter sp.) protein is Thymidylate synthase.